The following is a 391-amino-acid chain: tRNA(Met) cytidine acetate ligase (391 aa).

ATP is bound by residues 7 to 20 (IAEYNPLHNGHIYQ), G101, N153, and R178.

It belongs to the TmcAL family.

It is found in the cytoplasm. The enzyme catalyses cytidine(34) in elongator tRNA(Met) + acetate + ATP = N(4)-acetylcytidine(34) in elongator tRNA(Met) + AMP + diphosphate. Its function is as follows. Catalyzes the formation of N(4)-acetylcytidine (ac(4)C) at the wobble position of elongator tRNA(Met), using acetate and ATP as substrates. First activates an acetate ion to form acetyladenylate (Ac-AMP) and then transfers the acetyl group to tRNA to form ac(4)C34. The protein is tRNA(Met) cytidine acetate ligase of Latilactobacillus sakei subsp. sakei (strain 23K) (Lactobacillus sakei subsp. sakei).